The chain runs to 261 residues: Type III pantothenate kinase (261 aa).

Position 7–14 (7–14 (EQGNTNTM)) interacts with ATP. 108-111 (GADR) serves as a coordination point for substrate. The Proton acceptor role is filled by Asp-110. Asp-130 provides a ligand contact to K(+). Thr-133 serves as a coordination point for ATP. Thr-187 contributes to the substrate binding site.

It belongs to the type III pantothenate kinase family. In terms of assembly, homodimer. The cofactor is NH4(+). It depends on K(+) as a cofactor.

The protein localises to the cytoplasm. The enzyme catalyses (R)-pantothenate + ATP = (R)-4'-phosphopantothenate + ADP + H(+). Its pathway is cofactor biosynthesis; coenzyme A biosynthesis; CoA from (R)-pantothenate: step 1/5. Functionally, catalyzes the phosphorylation of pantothenate (Pan), the first step in CoA biosynthesis. This Caulobacter vibrioides (strain ATCC 19089 / CIP 103742 / CB 15) (Caulobacter crescentus) protein is Type III pantothenate kinase.